The primary structure comprises 357 residues: MPTGGKSTLTQFLIEERRKHPAATGELNALITDVSLACKAISRKVAFGGLAGVLGSAGSGNVQGEEQKTLDVLSNTMFLRATEWGGHVAGMVSEELEAPYTLPPQYARGKYLLMFDPLDGSSNIDVNVTVGSIFAIHRAPQPRQDPQPQDYLQPGTTMVCGGYAIYGPSTMLVLTLGDGTHAFTLDPQLGEWVLSHPNLRIPEKTREFAINASNSRFWEPAVKRYVDECLAGSTGPRGTDFNMRWIASLVAETHRILMRGGVFLYPRDSKDPNKAGRLRLLYEANPISFLIEQAGGMASTGRKRLLEVQPEDIHQRIGFVFGSTEEVARIEAYHRDEPPTPYNSPLFGKRGLFAEAG.

Residues glutamate 94, aspartate 116, leucine 118, and aspartate 119 each coordinate Mg(2+). Residues 119 to 122 and asparagine 211 each bind substrate; that span reads DGSS. A Mg(2+)-binding site is contributed by glutamate 283.

It belongs to the FBPase class 1 family. In terms of assembly, homotetramer. Mg(2+) is required as a cofactor.

It localises to the cytoplasm. It carries out the reaction beta-D-fructose 1,6-bisphosphate + H2O = beta-D-fructose 6-phosphate + phosphate. Its pathway is carbohydrate biosynthesis; Calvin cycle. This chain is Fructose-1,6-bisphosphatase class 1 3, found in Methylibium petroleiphilum (strain ATCC BAA-1232 / LMG 22953 / PM1).